The following is a 696-amino-acid chain: MKAPIPHLILLYATFTQSLKVVTKRGSADGCTDWSIDIKKYQVLVGEPVRIKCALFYGYIRTNYSLAQSAGLSLMWYKSSGPGDFEEPIAFDGSRMSKEEDSIWFRPTLLQDSGLYACVIRNSTYCMKVSISLTVGENDTGLCYNSKMKYFEKAELSKSKEISCRDIEDFLLPTREPEILWYKECRTKTWRPSIVFKRDTLLIREVREDDIGNYTCELKYGGFVVRRTTELTVTAPLTDKPPKLLYPMESKLTIQETQLGDSANLTCRAFFGYSGDVSPLIYWMKGEKFIEDLDENRVWESDIRILKEHLGEQEVSISLIVDSVEEGDLGNYSCYVENGNGRRHASVLLHKRELMYTVELAGGLGAILLLLVCLVTIYKCYKIEIMLFYRNHFGAEELDGDNKDYDAYLSYTKVDPDQWNQETGEEERFALEILPDMLEKHYGYKLFIPDRDLIPTGTYIEDVARCVDQSKRLIIVMTPNYVVRRGWSIFELETRLRNMLVTGEIKVILIECSELRGIMNYQEVEALKHTIKLLTVIKWHGPKCNKLNSKFWKRLQYEMPFKRIEPITHEQALDVSEQGPFGELQTVSAISMAAATSTALATAHPDLRSTFHNTYHSQMRQKHYYRSYEYDVPPTGTLPLTSIGNQHTYCNIPMTLINGQRPQTKSSREQNPDEAHTNSAILPLLPRETSISSVIW.

The N-terminal stretch at 1 to 18 (MKAPIPHLILLYATFTQS) is a signal peptide. The Ig-like C2-type 1 domain maps to 19–134 (LKVVTKRGSA…YCMKVSISLT (116 aa)). At 19 to 357 (LKVVTKRGSA…LLHKRELMYT (339 aa)) the chain is on the extracellular side. Cystine bridges form between cysteine 31-cysteine 126 and cysteine 53-cysteine 118. Residues asparagine 63, asparagine 122, and asparagine 138 are each glycosylated (N-linked (GlcNAc...) asparagine). Cystine bridges form between cysteine 143-cysteine 185 and cysteine 164-cysteine 216. 2 Ig-like C2-type domains span residues 143–232 (CYNS…TELT) and 242–350 (PKLL…VLLH). Residues asparagine 213, asparagine 264, and asparagine 331 are each glycosylated (N-linked (GlcNAc...) asparagine). A disulfide bond links cysteine 267 and cysteine 334. Residues 358–378 (VELAGGLGAILLLLVCLVTIY) form a helical membrane-spanning segment. Topologically, residues 379-696 (KCYKIEIMLF…RETSISSVIW (318 aa)) are cytoplasmic. The TIR domain occupies 403-559 (KDYDAYLSYT…KFWKRLQYEM (157 aa)). Residue glutamate 491 is part of the active site. The interaction with NCS1 stretch occupies residues 549 to 644 (SKFWKRLQYE…TGTLPLTSIG (96 aa)). The interval 659-680 (GQRPQTKSSREQNPDEAHTNSA) is disordered. Residues 666–676 (SSREQNPDEAH) are compositionally biased toward basic and acidic residues.

Belongs to the interleukin-1 receptor family. As to quaternary structure, homodimer. Interacts (calcium-independent) with NCS1. Interacts (via the first immunoglobilin domain) with PTPRD (via the second immunoglobilin domain); this interaction is PTPRD-splicing-dependent and induces pre- and post-synaptic differentiation of neurons and is required for IL1RAPL1-mediated synapse formation. As to expression, detected at low levels in heart, skeletal muscle, ovary, skin, amygdala, caudate nucleus, corpus callosum, hippocampus, substantia nigra and thalamus. Detected at very low levels in tonsil, prostate, testis, small intestine, placenta, colon and fetal liver.

It localises to the cell membrane. Its subcellular location is the cytoplasm. The protein localises to the cell projection. The protein resides in the axon. It is found in the dendrite. The enzyme catalyses NAD(+) + H2O = ADP-D-ribose + nicotinamide + H(+). May regulate secretion and presynaptic differentiation through inhibition of the activity of N-type voltage-gated calcium channel. May activate the MAP kinase JNK. Plays a role in neurite outgrowth. During dendritic spine formation can bidirectionally induce pre- and post-synaptic differentiation of neurons by trans-synaptically binding to PTPRD. In Homo sapiens (Human), this protein is Interleukin-1 receptor accessory protein-like 1 (IL1RAPL1).